Here is a 2430-residue protein sequence, read N- to C-terminus: Spatacsin (2430 aa).

Residues Ser-1942 and Ser-1943 each carry the phosphoserine modification.

Interacts with AP5Z1, AP5B1, AP5S1 and ZFYVE26. Ubiquitously expressed at low level. Expressed in embryonic and adult cortical projection neurons.

It localises to the cytoplasm. Its subcellular location is the cytosol. It is found in the nucleus. The protein resides in the cell projection. The protein localises to the axon. It localises to the dendrite. Its subcellular location is the synapse. Its function is as follows. May play a role in neurite plasticity by maintaining cytoskeleton stability and regulating synaptic vesicle transport. This chain is Spatacsin (Spg11), found in Mus musculus (Mouse).